We begin with the raw amino-acid sequence, 160 residues long: Ribosomal RNA large subunit methyltransferase H (160 aa).

Residues Leu76, Gly108, and 127 to 132 contribute to the S-adenosyl-L-methionine site; that span reads LGKMTW.

The protein belongs to the RNA methyltransferase RlmH family. Homodimer.

Its subcellular location is the cytoplasm. It catalyses the reaction pseudouridine(1915) in 23S rRNA + S-adenosyl-L-methionine = N(3)-methylpseudouridine(1915) in 23S rRNA + S-adenosyl-L-homocysteine + H(+). Its function is as follows. Specifically methylates the pseudouridine at position 1915 (m3Psi1915) in 23S rRNA. The chain is Ribosomal RNA large subunit methyltransferase H from Rhizobium rhizogenes (strain K84 / ATCC BAA-868) (Agrobacterium radiobacter).